The chain runs to 644 residues: Ribonuclease R (644 aa).

Positions 211–529 (RINYSHIPFI…LHRLLKELLF (319 aa)) constitute an RNB domain. In terms of domain architecture, S1 motif spans 573-644 (LEFLEKEFLG…ITERIKEHVS (72 aa)).

It belongs to the RNR ribonuclease family. RNase R subfamily.

The protein resides in the cytoplasm. The enzyme catalyses Exonucleolytic cleavage in the 3'- to 5'-direction to yield nucleoside 5'-phosphates.. 3'-5' exoribonuclease that releases 5'-nucleoside monophosphates and is involved in maturation of structured RNAs. The polypeptide is Ribonuclease R (Helicobacter pylori (strain J99 / ATCC 700824) (Campylobacter pylori J99)).